The primary structure comprises 568 residues: Tyrosine-protein kinase transforming protein Src (568 aa).

The disordered stretch occupies residues 1 to 58 (MGSSKSKPKDPSQRRRSLEPPDSTHHGGFPASQTPNKTAAPDTHRTPSRSFGTVATEP). The N-myristoyl glycine; by host moiety is linked to residue glycine 2. The segment covering 7–25 (KPKDPSQRRRSLEPPDSTH) has biased composition (basic and acidic residues). An SH3 domain is found at 81 to 142 (GGVTTFVALY…PSNYVAPSDS (62 aa)). One can recognise an SH2 domain in the interval 148–245 (WYFGKITRRE…GLCHRLTNVC (98 aa)). In terms of domain architecture, Protein kinase spans 267-520 (LRLEVKLGQG…YLQAFLEDYF (254 aa)). ATP is bound by residues 273–281 (LGQGCFGEV) and lysine 295. The active-site Proton acceptor is the aspartate 386. Position 416 is a phosphotyrosine; by autocatalysis (tyrosine 416).

The protein belongs to the protein kinase superfamily. Tyr protein kinase family. SRC subfamily. In terms of processing, the phosphorylated form is termed pp60v-src.

The enzyme catalyses L-tyrosyl-[protein] + ATP = O-phospho-L-tyrosyl-[protein] + ADP + H(+). Functionally, this phosphoprotein, required for both the initiation and the maintenance of neoplastic transformation, is a protein kinase that catalyzes the phosphorylation of tyrosine residues in vitro. This is Tyrosine-protein kinase transforming protein Src (V-SRC) from Galliformes.